Consider the following 526-residue polypeptide: Cytochrome P450 monooxygenase COX2 (526 aa).

Asn-11 carries N-linked (GlcNAc...) asparagine glycosylation. Residues 12–31 (ITTNHVAAAVCAGIAVYAIV) form a helical membrane-spanning segment. The N-linked (GlcNAc...) asparagine glycan is linked to Asn-302. Cys-450 is a binding site for heme.

It belongs to the cytochrome P450 family. Heme serves as cofactor.

The protein resides in the membrane. It participates in secondary metabolite biosynthesis. Functionally, cytochrome P450 monooxygenase; part of the gene cluster that mediates the biosynthesis of alpha-cuprenene and oxidized derivatives. The alpha-cuprenene synthase COP6 is the only sesquiterpene synthase identified in C.cinereus that appears to be part of a biosynthetic gene cluster and is highly specific since it catalyzes the cyclization of (2E,6E)-farnesyl diphosphate into only one product, alpha-cuprenene. The cytochrome P450 monooxygenase COX2 then oxidizes the cyclohexadiene ring of alpha-cuprenene at positions 1 and 4, yielding first alpha-cuparene, followed by alpha-cuparophenol and a further yet unidentified compound resulting from one additional oxidation step. The cytochrome P450 monooxygenase COX1 then likely catalyzes the oxidation at position 9 of the pentane ring of alpha-cuprenene to give the corresponding hydroxy or ketone derivatives. The protein is Cytochrome P450 monooxygenase COX2 of Coprinopsis cinerea (strain Okayama-7 / 130 / ATCC MYA-4618 / FGSC 9003) (Inky cap fungus).